We begin with the raw amino-acid sequence, 206 residues long: Small ribosomal subunit protein uS4 (206 aa).

An S4 RNA-binding domain is found at 98 to 164 (MRLDNVVYRL…EKFKTFIENP (67 aa)).

This sequence belongs to the universal ribosomal protein uS4 family. As to quaternary structure, part of the 30S ribosomal subunit. Contacts protein S5. The interaction surface between S4 and S5 is involved in control of translational fidelity.

In terms of biological role, one of the primary rRNA binding proteins, it binds directly to 16S rRNA where it nucleates assembly of the body of the 30S subunit. With S5 and S12 plays an important role in translational accuracy. The polypeptide is Small ribosomal subunit protein uS4 (Clostridium tetani (strain Massachusetts / E88)).